Here is a 472-residue protein sequence, read N- to C-terminus: Siroheme synthase 1 (472 aa).

A precorrin-2 dehydrogenase /sirohydrochlorin ferrochelatase region spans residues 1 to 203 (MDYLPLFADL…GQLTEAENEL (203 aa)). NAD(+) is bound by residues 22–23 (EV) and 43–44 (QT). S128 carries the post-translational modification Phosphoserine. Residues 215 to 472 (GEVALVGAGP…AISPSVVNLA (258 aa)) are uroporphyrinogen-III C-methyltransferase. S-adenosyl-L-methionine is bound at residue P224. D247 functions as the Proton acceptor in the catalytic mechanism. The active-site Proton donor is the K269. S-adenosyl-L-methionine-binding positions include 300–302 (GGD), I305, 330–331 (TA), M382, and G411.

This sequence in the N-terminal section; belongs to the precorrin-2 dehydrogenase / sirohydrochlorin ferrochelatase family. The protein in the C-terminal section; belongs to the precorrin methyltransferase family.

The catalysed reaction is uroporphyrinogen III + 2 S-adenosyl-L-methionine = precorrin-2 + 2 S-adenosyl-L-homocysteine + H(+). It catalyses the reaction precorrin-2 + NAD(+) = sirohydrochlorin + NADH + 2 H(+). The enzyme catalyses siroheme + 2 H(+) = sirohydrochlorin + Fe(2+). The protein operates within cofactor biosynthesis; adenosylcobalamin biosynthesis; precorrin-2 from uroporphyrinogen III: step 1/1. It participates in cofactor biosynthesis; adenosylcobalamin biosynthesis; sirohydrochlorin from precorrin-2: step 1/1. It functions in the pathway porphyrin-containing compound metabolism; siroheme biosynthesis; precorrin-2 from uroporphyrinogen III: step 1/1. Its pathway is porphyrin-containing compound metabolism; siroheme biosynthesis; siroheme from sirohydrochlorin: step 1/1. The protein operates within porphyrin-containing compound metabolism; siroheme biosynthesis; sirohydrochlorin from precorrin-2: step 1/1. Multifunctional enzyme that catalyzes the SAM-dependent methylations of uroporphyrinogen III at position C-2 and C-7 to form precorrin-2 via precorrin-1. Then it catalyzes the NAD-dependent ring dehydrogenation of precorrin-2 to yield sirohydrochlorin. Finally, it catalyzes the ferrochelation of sirohydrochlorin to yield siroheme. The sequence is that of Siroheme synthase 1 from Yersinia pseudotuberculosis serotype I (strain IP32953).